Reading from the N-terminus, the 141-residue chain is Lutropin subunit beta (141 aa).

Positions 1 to 20 (MEMLQGLLLWLLLSMGGARA) are cleaved as a signal peptide. 6 disulfides stabilise this stretch: C29-C77, C43-C92, C46-C130, C54-C108, C58-C110, and C113-C120. N-linked (GlcNAc...) asparagine glycans are attached at residues N33 and N50.

Belongs to the glycoprotein hormones subunit beta family. As to quaternary structure, heterodimer of a common alpha chain and a unique beta chain which confers biological specificity to thyrotropin, lutropin, follitropin and gonadotropin.

Its subcellular location is the secreted. In terms of biological role, promotes spermatogenesis and ovulation by stimulating the testes and ovaries to synthesize steroids. This is Lutropin subunit beta (LHB) from Macaca fascicularis (Crab-eating macaque).